The following is a 278-amino-acid chain: Elongation factor Ts (278 aa).

The interval 80–83 (TDFV) is involved in Mg(2+) ion dislocation from EF-Tu.

The protein belongs to the EF-Ts family.

It is found in the cytoplasm. Functionally, associates with the EF-Tu.GDP complex and induces the exchange of GDP to GTP. It remains bound to the aminoacyl-tRNA.EF-Tu.GTP complex up to the GTP hydrolysis stage on the ribosome. In Arthrobacter sp. (strain FB24), this protein is Elongation factor Ts.